Here is a 100-residue protein sequence, read N- to C-terminus: Urease subunit gamma (100 aa).

This sequence belongs to the urease gamma subunit family. In terms of assembly, heterotrimer of UreA (gamma), UreB (beta) and UreC (alpha) subunits. Three heterotrimers associate to form the active enzyme.

Its subcellular location is the cytoplasm. It catalyses the reaction urea + 2 H2O + H(+) = hydrogencarbonate + 2 NH4(+). Its pathway is nitrogen metabolism; urea degradation; CO(2) and NH(3) from urea (urease route): step 1/1. The chain is Urease subunit gamma from Nostoc sp. (strain PCC 7120 / SAG 25.82 / UTEX 2576).